The sequence spans 59 residues: Large ribosomal subunit protein uL30 (59 aa).

The protein belongs to the universal ribosomal protein uL30 family. In terms of assembly, part of the 50S ribosomal subunit.

In Solibacter usitatus (strain Ellin6076), this protein is Large ribosomal subunit protein uL30.